Reading from the N-terminus, the 328-residue chain is Tetraacyldisaccharide 4'-kinase (328 aa).

55-62 is a binding site for ATP; sequence TAGGNGKT.

This sequence belongs to the LpxK family.

The catalysed reaction is a lipid A disaccharide + ATP = a lipid IVA + ADP + H(+). The protein operates within glycolipid biosynthesis; lipid IV(A) biosynthesis; lipid IV(A) from (3R)-3-hydroxytetradecanoyl-[acyl-carrier-protein] and UDP-N-acetyl-alpha-D-glucosamine: step 6/6. Transfers the gamma-phosphate of ATP to the 4'-position of a tetraacyldisaccharide 1-phosphate intermediate (termed DS-1-P) to form tetraacyldisaccharide 1,4'-bis-phosphate (lipid IVA). This Escherichia coli (strain 55989 / EAEC) protein is Tetraacyldisaccharide 4'-kinase.